The sequence spans 657 residues: 2',3'-cyclic-nucleotide 2'-phosphodiesterase/3'-nucleotidase (657 aa).

A signal peptide spans 1–26 (MMNRRHFIQISATSILALSANRFAMA). Residues Asp-41, His-43, Asp-86, Asn-126, His-235, His-267, and His-269 each contribute to the a divalent metal cation site. Substrate-binding positions include Tyr-450 and 554 to 559 (YRAYGN).

This sequence belongs to the 5'-nucleotidase family. A divalent metal cation serves as cofactor.

Its subcellular location is the periplasm. The enzyme catalyses a nucleoside 2',3'-cyclic phosphate + H2O = a nucleoside 3'-phosphate + H(+). The catalysed reaction is a ribonucleoside 3'-phosphate + H2O = a ribonucleoside + phosphate. In terms of biological role, this bifunctional enzyme catalyzes two consecutive reactions during ribonucleic acid degradation. Converts a 2',3'-cyclic nucleotide to a 3'-nucleotide and then the 3'-nucleotide to the corresponding nucleoside and phosphate. This chain is 2',3'-cyclic-nucleotide 2'-phosphodiesterase/3'-nucleotidase (cpdB), found in Haemophilus influenzae (strain ATCC 51907 / DSM 11121 / KW20 / Rd).